Here is a 271-residue protein sequence, read N- to C-terminus: MAPRALPGSAVLAAAVFVGGAVSSPLVAPDNGSSRTLHSRTETTPSPSNDTGNGHPEYIAYALVPVFFIMGLFGVLICHLLKKKGYRCTTEAEQDIEEEKVEKIELNDSVNENSDTVGQIVHYIMKNEANADVLKAMVADNSLYDPESPVTPSTPGSPPVSPGPLSPGGTPGKHVCGHHLHTVGGVVERDVCHRCRHKRWHFIKPTNKSRESRPRRQGEVTVLSVGRFRVTKVEHKSNQKERRSLMSVSGAETVNGEVPATPVKRERSGTE.

Positions 1–23 (MAPRALPGSAVLAAAVFVGGAVS) are cleaved as a signal peptide. The Extracellular portion of the chain corresponds to 24–57 (SPLVAPDNGSSRTLHSRTETTPSPSNDTGNGHPE). The disordered stretch occupies residues 28–53 (APDNGSSRTLHSRTETTPSPSNDTGN). Asn-31 and Asn-49 each carry an N-linked (GlcNAc...) asparagine glycan. The span at 31–52 (NGSSRTLHSRTETTPSPSNDTG) shows a compositional bias: polar residues. Residues 58–78 (YIAYALVPVFFIMGLFGVLIC) form a helical membrane-spanning segment. Residues 79–271 (HLLKKKGYRC…PVKRERSGTE (193 aa)) are Cytoplasmic-facing. A coiled-coil region spans residues 89-113 (TTEAEQDIEEEKVEKIELNDSVNEN). Phosphoserine is present on residues Ser-109 and Ser-114. 2 disordered regions span residues 145-173 (DPESPVTPSTPGSPPVSPGPLSPGGTPGK) and 233-271 (VEHKSNQKERRSLMSVSGAETVNGEVPATPVKRERSGTE). Pro residues predominate over residues 155 to 165 (PGSPPVSPGPL). Basic and acidic residues predominate over residues 233 to 244 (VEHKSNQKERRS). 2 positions are modified to phosphoserine: Ser-244 and Ser-247.

This sequence belongs to the RELT family. In terms of assembly, interacts with RELT, RELL2 and OXSR1. Interacts with PLSCR1. Post-translationally, phosphorylated in vitro by OXSR1. As to expression, widely expressed. Expressed at highest levels in the placenta, skeletal muscle, spleen and testis.

It is found in the cell membrane. In terms of biological role, induces activation of MAPK14/p38 cascade, when overexpressed. Induces apoptosis, when overexpressed. This is RELT-like protein 1 (RELL1) from Homo sapiens (Human).